Reading from the N-terminus, the 292-residue chain is MRISVKAPAKINLTLDVLAKRPDGYHEVEMVMTTVDLADRVDMTLREDGEITLDCSASFVPDDIRNHAYKAATLMKAKFQVRQGVHLYIDKQIPVAAGLAGGSSDAAATLRGLNQLWNLGLTRDELAKIGAEIGSDVPFCVYGGTALATGRGEQIAHLGAPAPCWVILAKPPIGVSTPDVYGNLRVAQIDNHPDTKQMLQAIATQDFSLMCQSLGNVLENVTLSLHPQVRQIKDLMIASGADGVLMSGSGPTVFALVQKEAKVHRIYNALRGFVKDVFVVRMLGAQEGEILA.

The active site involves Lys10. 94-104 serves as a coordination point for ATP; it reads PVAAGLAGGSS. Asp136 is an active-site residue.

It belongs to the GHMP kinase family. IspE subfamily.

The catalysed reaction is 4-CDP-2-C-methyl-D-erythritol + ATP = 4-CDP-2-C-methyl-D-erythritol 2-phosphate + ADP + H(+). It participates in isoprenoid biosynthesis; isopentenyl diphosphate biosynthesis via DXP pathway; isopentenyl diphosphate from 1-deoxy-D-xylulose 5-phosphate: step 3/6. Catalyzes the phosphorylation of the position 2 hydroxy group of 4-diphosphocytidyl-2C-methyl-D-erythritol. This chain is 4-diphosphocytidyl-2-C-methyl-D-erythritol kinase, found in Brevibacillus brevis (strain 47 / JCM 6285 / NBRC 100599).